The primary structure comprises 463 residues: Mitochondrial dynamics protein MID49 (463 aa).

The Mitochondrial intermembrane segment spans residues 1 to 24 (MAELQIRKKEKKSGDGIGTMVDFL). A helical transmembrane segment spans residues 25–47 (LANARLVLGVGGAAMLGIATLAV). Over 48 to 463 (KRLIDRATSP…EPDDVLKRER (416 aa)) the chain is Cytoplasmic. Residues 87-119 (TLRRKEDLEHHCAPLSLPDPSQKMPEATGTSQV) form a disordered region. Basic and acidic residues predominate over residues 89-98 (RRKEDLEHHC).

This sequence belongs to the MID49/MID51 family.

The protein localises to the mitochondrion outer membrane. Mitochondrial outer membrane protein which regulates mitochondrial organization. It is required for mitochondrial fission and promotes the recruitment and association of the fission mediator dynamin-related protein 1 (DNM1L) to the mitochondrial surface independently of the mitochondrial fission FIS1 and MFF proteins. Regulates DNM1L GTPase activity. The sequence is that of Mitochondrial dynamics protein MID49 (mief2) from Xenopus laevis (African clawed frog).